The following is a 224-amino-acid chain: Putative cytochrome c-type biogenesis protein DbsD-like (224 aa).

5 consecutive transmembrane segments (helical) span residues 32 to 52 (FIFL…ILPV), 74 to 94 (FLFC…ATLI), 104 to 124 (GIPT…LNIV), 150 to 170 (GIGI…LVWI), and 176 to 196 (IFTG…PIII).

This sequence belongs to the DsbD family.

The protein localises to the plastid. Its subcellular location is the chloroplast membrane. Could be involved in cytochrome c synthesis. The chain is Putative cytochrome c-type biogenesis protein DbsD-like from Pyropia yezoensis (Susabi-nori).